We begin with the raw amino-acid sequence, 336 residues long: Biotin synthase (336 aa).

The Radical SAM core domain maps to 54–281 (NAIQLSTLLS…KAMVRLSAGR (228 aa)). Residues cysteine 69, cysteine 73, and cysteine 76 each coordinate [4Fe-4S] cluster. Positions 113, 144, 204, and 276 each coordinate [2Fe-2S] cluster.

Belongs to the radical SAM superfamily. Biotin synthase family. In terms of assembly, homodimer. It depends on [4Fe-4S] cluster as a cofactor. The cofactor is [2Fe-2S] cluster.

The enzyme catalyses (4R,5S)-dethiobiotin + (sulfur carrier)-SH + 2 reduced [2Fe-2S]-[ferredoxin] + 2 S-adenosyl-L-methionine = (sulfur carrier)-H + biotin + 2 5'-deoxyadenosine + 2 L-methionine + 2 oxidized [2Fe-2S]-[ferredoxin]. It functions in the pathway cofactor biosynthesis; biotin biosynthesis; biotin from 7,8-diaminononanoate: step 2/2. Its function is as follows. Catalyzes the conversion of dethiobiotin (DTB) to biotin by the insertion of a sulfur atom into dethiobiotin via a radical-based mechanism. This chain is Biotin synthase, found in Burkholderia pseudomallei (strain 1710b).